A 299-amino-acid polypeptide reads, in one-letter code: DNA repair protein RecO (299 aa).

The tract at residues 1 to 62 (MTLNSDADPD…GRRAPRTPAS (62 aa)) is disordered. Low complexity predominate over residues 25 to 41 (ASKPARSTRKSSSAKSA).

The protein belongs to the RecO family.

In terms of biological role, involved in DNA repair and RecF pathway recombination. The polypeptide is DNA repair protein RecO (Paraburkholderia xenovorans (strain LB400)).